The primary structure comprises 637 residues: Transcriptional activator of proteases prtT (637 aa).

A DNA-binding region (zn(2)-C6 fungal-type) is located at residues 47-76; sequence CHTCRKLKTRCDVDPRGHSCRRCLSLRLDC. Residues 127–145 show a composition bias toward polar residues; that stretch reads PSMPCSPTFQTRNHSIDGT. Residues 127 to 153 are disordered; it reads PSMPCSPTFQTRNHSIDGTSSSDSMSS.

Belongs to the prtT family.

It is found in the nucleus. Transcription factor required for protein utilization and degradation. Regulates transcription of major secreted proteases. The chain is Transcriptional activator of proteases prtT (prtT) from Penicillium rubens (strain ATCC 28089 / DSM 1075 / NRRL 1951 / Wisconsin 54-1255) (Penicillium chrysogenum).